Consider the following 57-residue polypeptide: Large ribosomal subunit protein bL32 (57 aa).

This sequence belongs to the bacterial ribosomal protein bL32 family.

This is Large ribosomal subunit protein bL32 from Shouchella clausii (strain KSM-K16) (Alkalihalobacillus clausii).